The following is a 271-amino-acid chain: Undecaprenyl-diphosphatase (271 aa).

Helical transmembrane passes span 5–25 (LLIK…LPIS), 43–63 (FATM…VYYF), 80–100 (GFNL…IGIL), 109–129 (LFSP…MIVI), 145–165 (VSTS…FPGM), 186–206 (AEFS…FELV), 215–235 (LEWE…LIVV), and 246–266 (VLKP…FLIA).

This sequence belongs to the UppP family.

It is found in the cell membrane. The catalysed reaction is di-trans,octa-cis-undecaprenyl diphosphate + H2O = di-trans,octa-cis-undecaprenyl phosphate + phosphate + H(+). Its function is as follows. Catalyzes the dephosphorylation of undecaprenyl diphosphate (UPP). Confers resistance to bacitracin. The chain is Undecaprenyl-diphosphatase from Caldanaerobacter subterraneus subsp. tengcongensis (strain DSM 15242 / JCM 11007 / NBRC 100824 / MB4) (Thermoanaerobacter tengcongensis).